The following is a 511-amino-acid chain: Ulvan-active sulfatase (511 aa).

An N-terminal signal peptide occupies residues 1–34 (MNFKQNIVYKKMAISMKITAIRPIALVISFTLLS). The N-palmitoyl cysteine moiety is linked to residue C35. Residue C35 is the site of S-diacylglycerol cysteine attachment. Residues D59 and C99 each coordinate Ca(2+). Catalysis depends on C99, which acts as the Nucleophile. C99 is subject to 3-oxoalanine (Cys). H149 is a catalytic residue. Residue D305 participates in Ca(2+) binding.

It belongs to the sulfatase family. It depends on Ca(2+) as a cofactor. In terms of processing, the conversion to 3-oxoalanine (also known as C-formylglycine, FGly), of a serine or cysteine residue in prokaryotes and of a cysteine residue in eukaryotes, is critical for catalytic activity. This post-translational modification is severely defective in multiple sulfatase deficiency (MSD).

The protein localises to the cell membrane. Sulfatase involved in ulvan degradation. Ulvan is the main polysaccharide component of the Ulvales (green seaweed) cell wall. It is composed of disaccharide building blocks comprising 3-sulfated rhamnose (Rha3S) linked to D-glucuronic acid (GlcA), L-iduronic acid (IduA), or D-xylose (Xyl). In Formosa agariphila (strain DSM 15362 / KCTC 12365 / LMG 23005 / KMM 3901 / M-2Alg 35-1), this protein is Ulvan-active sulfatase.